Here is a 343-residue protein sequence, read N- to C-terminus: Transcription factor BPE (343 aa).

A bHLH domain is found at 142 to 192 (QATDSHSLAERARREKISERMKILQDLVPGCNKVIGKALVLDEIINYIQSL).

As to quaternary structure, homodimer. Specifically expressed in flowers, mostly in petals, inflorescence and flower buds. As to expression, expressed ubiquitously (leaves, flowers and stems).

The protein localises to the nucleus. In terms of biological role, involved in the control of petal size, by interfering with postmitotic cell expansion to limit final petal cell size. This is Transcription factor BPE (BPE) from Arabidopsis thaliana (Mouse-ear cress).